Consider the following 276-residue polypeptide: Diaminopimelate epimerase (276 aa).

Residues Asn-13, Gln-46, and Asn-66 each contribute to the substrate site. Cys-75 acts as the Proton donor in catalysis. Residues Gly-76 to Asn-77, Asn-159, Asn-192, and Glu-210 to Arg-211 contribute to the substrate site. Residue Cys-219 is the Proton acceptor of the active site. Position 220-221 (Gly-220–Ser-221) interacts with substrate.

This sequence belongs to the diaminopimelate epimerase family. As to quaternary structure, homodimer.

It is found in the cytoplasm. The enzyme catalyses (2S,6S)-2,6-diaminopimelate = meso-2,6-diaminopimelate. Its pathway is amino-acid biosynthesis; L-lysine biosynthesis via DAP pathway; DL-2,6-diaminopimelate from LL-2,6-diaminopimelate: step 1/1. Catalyzes the stereoinversion of LL-2,6-diaminopimelate (L,L-DAP) to meso-diaminopimelate (meso-DAP), a precursor of L-lysine and an essential component of the bacterial peptidoglycan. This Vibrio campbellii (strain ATCC BAA-1116) protein is Diaminopimelate epimerase.